Consider the following 254-residue polypeptide: Probable septum site-determining protein MinC (254 aa).

The protein belongs to the MinC family. As to quaternary structure, interacts with MinD and FtsZ.

In terms of biological role, cell division inhibitor that blocks the formation of polar Z ring septums. Rapidly oscillates between the poles of the cell to destabilize FtsZ filaments that have formed before they mature into polar Z rings. Prevents FtsZ polymerization. This chain is Probable septum site-determining protein MinC, found in Burkholderia ambifaria (strain ATCC BAA-244 / DSM 16087 / CCUG 44356 / LMG 19182 / AMMD) (Burkholderia cepacia (strain AMMD)).